The primary structure comprises 303 residues: UDP-3-O-acyl-N-acetylglucosamine deacetylase (303 aa).

Histidine 78, histidine 237, and aspartate 241 together coordinate Zn(2+). Catalysis depends on histidine 264, which acts as the Proton donor.

Belongs to the LpxC family. Requires Zn(2+) as cofactor.

The enzyme catalyses a UDP-3-O-[(3R)-3-hydroxyacyl]-N-acetyl-alpha-D-glucosamine + H2O = a UDP-3-O-[(3R)-3-hydroxyacyl]-alpha-D-glucosamine + acetate. The protein operates within glycolipid biosynthesis; lipid IV(A) biosynthesis; lipid IV(A) from (3R)-3-hydroxytetradecanoyl-[acyl-carrier-protein] and UDP-N-acetyl-alpha-D-glucosamine: step 2/6. Functionally, catalyzes the hydrolysis of UDP-3-O-myristoyl-N-acetylglucosamine to form UDP-3-O-myristoylglucosamine and acetate, the committed step in lipid A biosynthesis. The chain is UDP-3-O-acyl-N-acetylglucosamine deacetylase from Coxiella burnetii (strain CbuK_Q154) (Coxiella burnetii (strain Q154)).